A 146-amino-acid polypeptide reads, in one-letter code: Protein phosphatase 1 regulatory subunit 14D (146 aa).

The segment covering 1–16 (MLSSSAASCTSPNPDT) has biased composition (polar residues). The tract at residues 1–57 (MLSSSAASCTSPNPDTDNPDKKVRWSSEKRRRASSTDSESKTHLDISKLPRSRRPSR) is disordered. Basic and acidic residues-rich tracts occupy residues 18–28 (NPDKKVRWSSE) and 38–48 (SESKTHLDISK). The interval 21–25 (KKVRW) is interaction with protein phosphatase 1.

It belongs to the PP1 inhibitor family. Phosphorylated on several residues.

It is found in the cytoplasm. Functionally, inhibitor of PPP1CA. Has inhibitory activity only when phosphorylated, creating a molecular switch for regulating the phosphorylation status of PPP1CA substrates and smooth muscle contraction. In Rattus norvegicus (Rat), this protein is Protein phosphatase 1 regulatory subunit 14D (Ppp1r14d).